The primary structure comprises 137 residues: Large ribosomal subunit protein uL16 (137 aa).

Belongs to the universal ribosomal protein uL16 family. Part of the 50S ribosomal subunit.

Binds 23S rRNA and is also seen to make contacts with the A and possibly P site tRNAs. The chain is Large ribosomal subunit protein uL16 from Streptococcus uberis (strain ATCC BAA-854 / 0140J).